The sequence spans 374 residues: uncharacterized protein (374 aa).

This sequence belongs to the mimivirus R640 family.

It is found in the virion. This is an uncharacterized protein from Acanthamoeba polyphaga (Amoeba).